Here is a 474-residue protein sequence, read N- to C-terminus: Dol-P-Glc:Glc(2)Man(9)GlcNAc(2)-PP-Dol alpha-1,2-glucosyltransferase (474 aa).

Over 1–6 the chain is Cytoplasmic; the sequence is MAQLEG. Residues 7 to 27 traverse the membrane as a helical segment; sequence YYFSAALSCTFLVSCLLFSAF. Over 28 to 64 the chain is Extracellular; the sequence is SRALREPYMDEIFHLPQAQRYCEGRFSLSQWDPMITT. The helical transmembrane segment at 65–85 threads the bilayer; it reads LPGLYLVSVGVVKPASWILGW. The Cytoplasmic segment spans residues 86-97; it reads SEHVVCSIGMLR. A helical membrane pass occupies residues 98–118; sequence FVNLLFSVGNFYLLYLLFRKI. Residues 119–126 are Extracellular-facing; sequence QPRNKASS. A helical transmembrane segment spans residues 127 to 147; the sequence is SIQRILSTLTLAVFPTLYFFN. Topologically, residues 148–150 are cytoplasmic; sequence FLY. A helical transmembrane segment spans residues 151–171; that stretch reads YTEAGSVFFTLFAYLMCLYGN. Over 172–175 the chain is Extracellular; it reads HRTS. Residues 176 to 196 form a helical membrane-spanning segment; sequence ALLGFCGFMFRQTNIIWAAFC. Residues 197-256 are Cytoplasmic-facing; sequence AGHIIAQKCSEAWKTELQKKKEERLPPAKGPLSELRRVLQFLLMYSMSLKNLSMLFLLTW. A helical transmembrane segment spans residues 257 to 277; sequence PYMLLLLAFFVFVVVNGGIVV. Residues 278–283 lie on the Extracellular side of the membrane; it reads GDRSSH. Residues 284 to 304 traverse the membrane as a helical segment; the sequence is EACLHFPQLFYFFSFTAFFSF. Over 305 to 317 the chain is Cytoplasmic; it reads PHLLSPTKVKTFL. A helical membrane pass occupies residues 318 to 338; it reads SLVWKRRVQFSVITLVSVFLV. The Extracellular portion of the chain corresponds to 339–365; sequence WKFTYVHKYLLADNRHYTFYVWKRVFQ. A helical membrane pass occupies residues 366–386; the sequence is RHEIVKYLLVPAYMFAGWAVA. Topologically, residues 387 to 392 are cytoplasmic; the sequence is DSLKSK. Residues 393–413 form a helical membrane-spanning segment; it reads SIFWNLMFFVCLVASTVPQKL. Topologically, residues 414–436 are extracellular; sequence LEFRYFILPYIIYRLNMPLPPIS. Residues 437 to 457 traverse the membrane as a helical segment; that stretch reads RLVCELGCYAVVNFLTFYIFL. At 458 to 473 the chain is on the cytoplasmic side; it reads NKTFQWSDSHDIQRFM.

It belongs to the ALG10 glucosyltransferase family. In terms of assembly, interacts with KCNH1; may regulate KCNH1, possibly by regulating its N-glycosylation. Interacts with KCNH2; may reduce KCNH2 sensitivity to classic proarrhythmic drug blockade, possibly by regulating its N-glycosylation. As to expression, highly expressed in brain, skeletal muscle, uterus, small intestine and liver. Moderately expressed in lung and kidney. Weakly expressed in heart and stomach.

It localises to the endoplasmic reticulum membrane. It catalyses the reaction an alpha-D-Glc-(1-&gt;3)-alpha-D-Glc-(1-&gt;3)-alpha-D-Man-(1-&gt;2)-alpha-D-Man-(1-&gt;2)-alpha-D-Man-(1-&gt;3)-[alpha-D-Man-(1-&gt;2)-alpha-D-Man-(1-&gt;3)-[alpha-D-Man-(1-&gt;2)-alpha-D-Man-(1-&gt;6)]-alpha-D-Man-(1-&gt;6)]-beta-D-Man-(1-&gt;4)-beta-D-GlcNAc-(1-&gt;4)-alpha-D-GlcNAc-diphospho-di-trans,poly-cis-dolichol + a di-trans,poly-cis-dolichyl beta-D-glucosyl phosphate = a alpha-D-Glc-(1-&gt;2)-alpha-D-Glc-(1-&gt;3)-alpha-D-Glc-(1-&gt;3)-alpha-D-Man-(1-&gt;2)-alpha-D-Man-(1-&gt;2)-alpha-D-Man-(1-&gt;3)-[alpha-D-Man-(1-&gt;2)-alpha-D-Man-(1-&gt;3)-[alpha-D-Man-(1-&gt;2)-alpha-D-Man-(1-&gt;6)]-alpha-D-Man-(1-&gt;6)]-beta-D-Man-(1-&gt;4)-beta-D-GlcNAc-(1-&gt;4)-alpha-D-GlcNAc-diphospho-di-trans,poly-cis-dolichol + a di-trans,poly-cis-dolichyl phosphate + H(+). Its pathway is protein modification; protein glycosylation. Functionally, dol-P-Glc:Glc(2)Man(9)GlcNAc(2)-PP-Dol alpha-1,2-glucosyltransferase that operates in the biosynthetic pathway of dolichol-linked oligosaccharides, the glycan precursors employed in protein asparagine (N)-glycosylation. The assembly of dolichol-linked oligosaccharides begins on the cytosolic side of the endoplasmic reticulum membrane and finishes in its lumen. The sequential addition of sugars to dolichol pyrophosphate produces dolichol-linked oligosaccharides containing fourteen sugars, including two GlcNAcs, nine mannoses and three glucoses. Once assembled, the oligosaccharide is transferred from the lipid to nascent proteins by oligosaccharyltransferases. In the lumen of the endoplasmic reticulum, adds the third and last glucose residue from dolichyl phosphate glucose (Dol-P-Glc) onto the lipid-linked oligosaccharide intermediate Glc(2)Man(9)GlcNAc(2)-PP-Dol to produce Glc(3)Man(9)GlcNAc(2)-PP-Dol. The polypeptide is Dol-P-Glc:Glc(2)Man(9)GlcNAc(2)-PP-Dol alpha-1,2-glucosyltransferase (Rattus norvegicus (Rat)).